The primary structure comprises 434 residues: Trigger factor (434 aa).

Positions 161–246 (EDRVVIDFTG…VKQVQAPVLP (86 aa)) constitute a PPIase FKBP-type domain.

This sequence belongs to the FKBP-type PPIase family. Tig subfamily.

Its subcellular location is the cytoplasm. The catalysed reaction is [protein]-peptidylproline (omega=180) = [protein]-peptidylproline (omega=0). Its function is as follows. Involved in protein export. Acts as a chaperone by maintaining the newly synthesized protein in an open conformation. Functions as a peptidyl-prolyl cis-trans isomerase. The chain is Trigger factor from Dechloromonas aromatica (strain RCB).